Consider the following 162-residue polypeptide: SsrA-binding protein (162 aa).

Belongs to the SmpB family.

It is found in the cytoplasm. Functionally, required for rescue of stalled ribosomes mediated by trans-translation. Binds to transfer-messenger RNA (tmRNA), required for stable association of tmRNA with ribosomes. tmRNA and SmpB together mimic tRNA shape, replacing the anticodon stem-loop with SmpB. tmRNA is encoded by the ssrA gene; the 2 termini fold to resemble tRNA(Ala) and it encodes a 'tag peptide', a short internal open reading frame. During trans-translation Ala-aminoacylated tmRNA acts like a tRNA, entering the A-site of stalled ribosomes, displacing the stalled mRNA. The ribosome then switches to translate the ORF on the tmRNA; the nascent peptide is terminated with the 'tag peptide' encoded by the tmRNA and targeted for degradation. The ribosome is freed to recommence translation, which seems to be the essential function of trans-translation. This chain is SsrA-binding protein, found in Buchnera aphidicola subsp. Acyrthosiphon pisum (strain 5A).